The sequence spans 445 residues: Phenylacetate-coenzyme A ligase (445 aa).

This sequence belongs to the phenylacetyl-CoA ligase family. In terms of assembly, monomer.

It carries out the reaction 2-phenylacetate + ATP + CoA = phenylacetyl-CoA + AMP + diphosphate. It functions in the pathway aromatic compound metabolism; phenylacetate degradation. Its function is as follows. Catalyzes the activation of phenylacetic acid (PA) to phenylacetyl-CoA (PA-CoA). Involved in the phenylalanine metabolism. The chain is Phenylacetate-coenzyme A ligase from Thermus thermophilus (strain ATCC BAA-163 / DSM 7039 / HB27).